The primary structure comprises 70 residues: Cold shock protein CspV (70 aa).

Residues 7 to 67 (GSVKWFNETK…GKKGPQASNV (61 aa)) form the CSD domain.

It localises to the cytoplasm. The sequence is that of Cold shock protein CspV (cspV) from Vibrio cholerae serotype O1 (strain ATCC 39315 / El Tor Inaba N16961).